The primary structure comprises 486 residues: Glutamyl-tRNA(Gln) amidotransferase subunit A (486 aa).

Residues lysine 80 and serine 155 each act as charge relay system in the active site. Serine 179 (acyl-ester intermediate) is an active-site residue.

The protein belongs to the amidase family. GatA subfamily. Heterotrimer of A, B and C subunits.

The catalysed reaction is L-glutamyl-tRNA(Gln) + L-glutamine + ATP + H2O = L-glutaminyl-tRNA(Gln) + L-glutamate + ADP + phosphate + H(+). Functionally, allows the formation of correctly charged Gln-tRNA(Gln) through the transamidation of misacylated Glu-tRNA(Gln) in organisms which lack glutaminyl-tRNA synthetase. The reaction takes place in the presence of glutamine and ATP through an activated gamma-phospho-Glu-tRNA(Gln). This chain is Glutamyl-tRNA(Gln) amidotransferase subunit A, found in Geobacillus sp. (strain WCH70).